We begin with the raw amino-acid sequence, 284 residues long: Ermin (284 aa).

A disordered region spans residues 1–61 (MTDVPATFTQ…APTKGSQEER (61 aa)). Residue Ser-73 is modified to Phosphoserine. The segment at 108-251 (TFREGRQWEK…PTLGKKSDIS (144 aa)) is disordered. 2 stretches are compositionally biased toward basic and acidic residues: residues 126–140 (EIRR…QPLK) and 171–183 (LHSK…KVWD). The segment covering 184–200 (EEIDDDDDDNCNDDEDE) has biased composition (acidic residues). Basic and acidic residues predominate over residues 201–220 (VRVIEFKKKHEEVSQFKEEG). Phosphoserine is present on residues Ser-214, Ser-226, Ser-230, and Ser-233. Residues 225 to 235 (DSPLSSASSQA) are compositionally biased toward low complexity. Thr-237 bears the Phosphothreonine mark. Residues 265 to 284 (KIRKGNTKQRIDEFESMMHL) are binds actin.

Binds actin.

The protein resides in the cytoplasm. The protein localises to the cytoskeleton. Its function is as follows. Plays a role in cytoskeletal rearrangements during the late wrapping and/or compaction phases of myelinogenesis as well as in maintenance and stability of myelin sheath in the adult. May play an important role in late-stage oligodendroglia maturation, myelin/Ranvier node formation during CNS development, and in the maintenance and plasticity of related structures in the mature CNS. In Pongo abelii (Sumatran orangutan), this protein is Ermin (ERMN).